Here is a 424-residue protein sequence, read N- to C-terminus: MEPLDTLNLWMERARDRARAISFGRFLWHRFLDDRLFQAAAALAYTTVFALVPLAIVVFGVLSAFPVFDRWSDQLSDYVFSNFVPNAARAAEGYLRQFSASAGQLTAAGFIALVVSLLITLNSVEETFNQIWRVGSTRPKLTRFLVYWTVLTLGAMLAAASLAVSARVFAMPLFGTQEGRWLAELALRLAPILIEFVCITLMFRVVPHHTVKWRHAVPGAILAAVILELVKWGIGAYLGSFQSYQKLYGTVAFVPILLLWIYLCWVAVLLGASLSSSMAAFRYQPVELRLPQGYEFYGLLRLLGRFHHARAKGKGLADDEILRLEPMLTDSLLQDLACNLQEIGLLRRDERGEWLLSRDLDQVSLADLYECTQLRIPVAEQHLPYRDDSLGRAALAALDDLRLPLRERLKRKVSDIYTDSGDMP.

6 helical membrane passes run 48–68 (VFALVPLAIVVFGVLSAFPVF), 101–121 (SAGQLTAAGFIALVVSLLITL), 144–164 (FLVYWTVLTLGAMLAAASLAV), 181–201 (WLAELALRLAPILIEFVCITL), 216–236 (AVPGAILAAVILELVKWGIGA), and 251–271 (VAFVPILLLWIYLCWVAVLLG).

The protein belongs to the UPF0761 family.

Its subcellular location is the cell inner membrane. In Stenotrophomonas maltophilia (strain K279a), this protein is UPF0761 membrane protein Smlt0865.